A 57-amino-acid chain; its full sequence is Protein new-glue 4 (57 aa).

The signal sequence occupies residues 1 to 16; the sequence is MEWKLLLIVLPWLLVC.

It localises to the secreted. This chain is Protein new-glue 4 (ng4), found in Drosophila melanogaster (Fruit fly).